Consider the following 340-residue polypeptide: Replication factor C subunit 3 (340 aa).

At serine 2 the chain carries N-acetylserine. ATP is bound by residues 16 to 19, arginine 20, tyrosine 28, 53 to 61, asparagine 148, and arginine 206; these read VEKY and GPPGTGKTS.

Belongs to the activator 1 small subunits family. In terms of assembly, replication factor C (RFC) is a heteropentamer of subunits RFC1, RFC2, RFC3, RFC4 and RFC5 and forms a complex with POL30/PCNA in the presence of ATP. Component of the RAD24-RFC complex which consists of RAD14, RFC2, RFC3, RFC4 and RFC5 and associates with the checkpoint clamp DDC1:MEC3:RAD17 complex. Component of the ELG1-RFC complex which consists of ELG1, RFC2, RFC3, RFC4 and RFC5. Component of the CTF18-RFC complex, which consists of CTF18, CTF8, DCC1, RFC2, RFC3, RFC4 and RFC5. RFC3 interacts with ECO1 and POL30/PCNA.

It localises to the nucleus. Component of ATP-dependent clamp loader (RFC and RFC-like) complexes for DNA clamps, such as the POL30/PCNA homotrimer and the checkpoint clamp DDC1:MEC3:RAD17 complex. During a clamp loading circle, the RFC:clamp complex binds to DNA and the recognition of the double-stranded/single-stranded junction stimulates ATP hydrolysis by RFC. The complex presumably provides bipartite ATP sites in which one subunit supplies a catalytic site for hydrolysis of ATP bound to the neighboring subunit. Dissociation of RFC from the clamp leaves the clamp encircling DNA. Component of the replication factor C (RFC or activator 1) complex which loads POL30/PCNA and acts during elongation of primed DNA templates by DNA polymerase delta and epsilon. RFC has an essential but redundant activity in sister chromatid cohesion establishment. Component of the RFC-like complex CTF18-RFC which is required for efficient establishment of chromosome cohesion during S-phase and may load or unload POL30/PCNA. Component of the RFC-like RAD24-RFC complex which loads the checkpoint clamp DDC1:MEC3:RAD17 complex and is involved in DNA repair pathways. Component of the RFC-like ELG1-RFC complex which appears to have a role in DNA replication, replication fork re-start, recombination and repair. RFC3 supplies a catalytic site to the ATP site of RFC4. The sequence is that of Replication factor C subunit 3 (RFC3) from Saccharomyces cerevisiae (strain ATCC 204508 / S288c) (Baker's yeast).